The following is a 1142-amino-acid chain: SNF1-activating kinase 1 (1142 aa).

Residues 22–41 (ELEKSGTSSSVSLRSPTKSS) form a disordered region. Thr43 is subject to Phosphothreonine. Residues 82-93 (QHQQHISSSLAK) are compositionally biased toward polar residues. Residues 82–107 (QHQQHISSSLAKTPTTTSSFCSSGSS) form a disordered region. Over residues 94–107 (TPTTTSSFCSSGSS) the composition is skewed to low complexity. Residues 133-448 (YEIIKELGHG…IPAIKKHPFV (316 aa)) form the Protein kinase domain. Residues 139-147 (LGHGQHGKV) and Lys162 each bind ATP. The Proton acceptor role is filled by Asp277. Disordered stretches follow at residues 634–678 (SPEA…VLPQ), 694–799 (NSLL…NSPI), 825–875 (SHFN…AYSE), 919–971 (KSSL…QKGS), 1005–1027 (SQPISKPGPLVLPKRLDQKKATT), and 1066–1142 (STNA…SALP). The span at 640–656 (SVSSVPNLPSAPSSTRL) shows a compositional bias: polar residues. Residues 694–706 (NSLLRNSSSHLTS) show a composition bias toward low complexity. The segment covering 707–741 (YNSGRPSSRTGRMNSRNQNLPKIPNSLSKISTTKL) has biased composition (polar residues). Residues 742-751 (TELRVPKDSE) are compositionally biased toward basic and acidic residues. The segment covering 785-799 (NINSSDKSGSKNSPI) has biased composition (polar residues). 2 stretches are compositionally biased toward low complexity: residues 835-868 (SSQSSVTSSGSESDSELSSTSSSCTSGTQSRNSS) and 920-936 (SSLNLEPPSVSSSSSSS). Polar residues predominate over residues 958–971 (SKLSELSNSPQKGS). Position 964 is a phosphoserine (Ser964). Positions 1096-1111 (NDEHARNTSCHGDKGQ) are enriched in basic and acidic residues. Ser1126 carries the post-translational modification Phosphoserine. The segment covering 1133 to 1142 (NEEKRRSALP) has biased composition (basic and acidic residues).

It belongs to the protein kinase superfamily. Ser/Thr protein kinase family. In terms of assembly, associates with the SNF1 kinase complex. Interacts with SNF1 and REG1. In terms of processing, autophosphorylated.

The protein localises to the cytoplasm. The catalysed reaction is L-seryl-[protein] + ATP = O-phospho-L-seryl-[protein] + ADP + H(+). It carries out the reaction L-threonyl-[protein] + ATP = O-phospho-L-threonyl-[protein] + ADP + H(+). Serine/threonine-protein kinase that phosphorylates SNF1, the catalytic subunit of the SNF1 kinase complex. Acts as an activator of the SNF1 kinase complex and controls its nuclear localization upon glucose and nitrogen depletion. Also required for SNF1 kinase activation under other stress conditions like alkaline pH or presence of cadmium. The chain is SNF1-activating kinase 1 (SAK1) from Saccharomyces cerevisiae (strain ATCC 204508 / S288c) (Baker's yeast).